A 354-amino-acid chain; its full sequence is GTPase Obg (354 aa).

One can recognise an Obg domain in the interval 1 to 159 (MKFLDQCKIY…RWIWLRLKLI (159 aa)). One can recognise an OBG-type G domain in the interval 160 to 328 (ADVGLVGLPN…LLRAAYKQVR (169 aa)). Residues 166–173 (GLPNAGKS), 191–195 (FTTLT), 213–216 (DIPG), 280–283 (NKID), and 309–311 (SGV) each bind GTP. Mg(2+) contacts are provided by S173 and T193. Over residues 335–345 (EEEIDDDEDHV) the composition is skewed to acidic residues. Residues 335–354 (EEEIDDDEDHVDETPGGWTP) are disordered.

This sequence belongs to the TRAFAC class OBG-HflX-like GTPase superfamily. OBG GTPase family. In terms of assembly, monomer. Mg(2+) serves as cofactor.

The protein localises to the cytoplasm. In terms of biological role, an essential GTPase which binds GTP, GDP and possibly (p)ppGpp with moderate affinity, with high nucleotide exchange rates and a fairly low GTP hydrolysis rate. Plays a role in control of the cell cycle, stress response, ribosome biogenesis and in those bacteria that undergo differentiation, in morphogenesis control. The polypeptide is GTPase Obg (Caulobacter vibrioides (strain ATCC 19089 / CIP 103742 / CB 15) (Caulobacter crescentus)).